A 384-amino-acid chain; its full sequence is Carbamoyl phosphate synthase small chain (384 aa).

A CPSase region spans residues 1-189; the sequence is MSKSALLVLE…GLPEAKDDSE (189 aa). The L-glutamine site is built by serine 47, glycine 241, and glycine 243. The Glutamine amidotransferase type-1 domain occupies 193-380; the sequence is HVVAYDFGAK…IELIKLSVNE (188 aa). The active-site Nucleophile is cysteine 269. The L-glutamine site is built by leucine 270, glutamine 273, asparagine 311, glycine 313, and phenylalanine 314. Catalysis depends on residues histidine 353 and glutamate 355.

Belongs to the CarA family. In terms of assembly, composed of two chains; the small (or glutamine) chain promotes the hydrolysis of glutamine to ammonia, which is used by the large (or ammonia) chain to synthesize carbamoyl phosphate. Tetramer of heterodimers (alpha,beta)4.

It catalyses the reaction hydrogencarbonate + L-glutamine + 2 ATP + H2O = carbamoyl phosphate + L-glutamate + 2 ADP + phosphate + 2 H(+). The enzyme catalyses L-glutamine + H2O = L-glutamate + NH4(+). It participates in amino-acid biosynthesis; L-arginine biosynthesis; carbamoyl phosphate from bicarbonate: step 1/1. The protein operates within pyrimidine metabolism; UMP biosynthesis via de novo pathway; (S)-dihydroorotate from bicarbonate: step 1/3. Small subunit of the glutamine-dependent carbamoyl phosphate synthetase (CPSase). CPSase catalyzes the formation of carbamoyl phosphate from the ammonia moiety of glutamine, carbonate, and phosphate donated by ATP, constituting the first step of 2 biosynthetic pathways, one leading to arginine and/or urea and the other to pyrimidine nucleotides. The small subunit (glutamine amidotransferase) binds and cleaves glutamine to supply the large subunit with the substrate ammonia. This is Carbamoyl phosphate synthase small chain from Photobacterium profundum (strain SS9).